The following is a 382-amino-acid chain: Sphingoid long-chain base transporter RSB1 (382 aa).

Residues 1 to 34 lie on the Extracellular side of the membrane; sequence MSNATNNTLGSLLPQLEAAANSNSLYGGMVPNLR. 2 N-linked (GlcNAc...) asparagine glycosylation sites follow: Asn-3 and Asn-6. Residues 35 to 55 form a helical membrane-spanning segment; that stretch reads FNITMIVIWGILLTIHVVQLL. Residues 56–57 lie on the Cytoplasmic side of the membrane; it reads MR. A helical membrane pass occupies residues 58–78; that stretch reads QYWFSIAFICTGILEVLGFIG. Residues 79 to 90 lie on the Extracellular side of the membrane; sequence RTWSHSNVADMD. A helical membrane pass occupies residues 91 to 111; that stretch reads AFLLNMICLTIAPVFTMGGIY. Residues 112–135 are Cytoplasmic-facing; that stretch reads YQLAKLIEVYGHRFSLLPSPMAYS. The chain crosses the membrane as a helical span at residues 136 to 156; that stretch reads FIFICSDIVSLVVQAVGGGLC. The Extracellular segment spans residues 157 to 171; it reads GVAVTDGTSTTTGNH. A helical transmembrane segment spans residues 172-192; the sequence is VFIAGLAIQVASMAIFLMLWF. Residues 193–241 are Cytoplasmic-facing; that stretch reads HFLFRIYISVRWEHINSRPISLSLLKISQTEVDYLYREKFHFLRLEPKR. Residues 242–262 form a helical membrane-spanning segment; sequence WVFHYFNLAITVAVLTIFTRC. At 263 to 281 the chain is on the extracellular side; that stretch reads CYRLAELVVGWDGYLITHE. A helical transmembrane segment spans residues 282 to 302; sequence WYFIILDALMMAIATVTLTIF. At 303-382 the chain is on the cytoplasmic side; the sequence is HPGFAFKGKS…LFSSKKKAKL (80 aa).

It belongs to the lipid-translocating exporter (LTE) (TC 9.A.26.1) family.

The protein localises to the cell membrane. Functionally, catalyzes the ATP-dependent translocation of sphingoid long-chain bases (LCBs) from the cytoplasmic site toward the extracytoplasmic side of the membrane (flip-flop). Involved in the establishment of the functional lipid asymmetry of the plasma membrane. Regulates intracellular levels of LCBs, sphingolipid precursors that are growth inhibitory at increased levels. The polypeptide is Sphingoid long-chain base transporter RSB1 (RSB1) (Saccharomyces cerevisiae (strain JAY291) (Baker's yeast)).